The primary structure comprises 438 residues: Metacaspase-1B (438 aa).

The interval 1–125 (MYYHHSHQGW…SQHFGRGAPS (125 aa)) is disordered. Residues 29–38 (PYPYSSNAQY) show a composition bias toward low complexity. Positions 39-74 (QPPPGPPPTSHYAPPPGPPPSHYYPPPGSYPSPAPS) are enriched in pro residues. Catalysis depends on residues His-222 and Cys-278.

Belongs to the peptidase C14B family.

Involved in cell death (apoptosis). The chain is Metacaspase-1B (casB) from Aspergillus niger (strain ATCC MYA-4892 / CBS 513.88 / FGSC A1513).